Here is a 339-residue protein sequence, read N- to C-terminus: DNA-directed RNA polymerase subunit alpha (339 aa).

An alpha N-terminal domain (alpha-NTD) region spans residues 1–233 (MVREEVAGST…DLFLPFLHAE (233 aa)). The interval 264 to 339 (KKGIPLNCIF…IDLLKNKLSF (76 aa)) is alpha C-terminal domain (alpha-CTD).

It belongs to the RNA polymerase alpha chain family. As to quaternary structure, in plastids the minimal PEP RNA polymerase catalytic core is composed of four subunits: alpha, beta, beta', and beta''. When a (nuclear-encoded) sigma factor is associated with the core the holoenzyme is formed, which can initiate transcription.

It is found in the plastid. Its subcellular location is the chloroplast. It catalyses the reaction RNA(n) + a ribonucleoside 5'-triphosphate = RNA(n+1) + diphosphate. Its function is as follows. DNA-dependent RNA polymerase catalyzes the transcription of DNA into RNA using the four ribonucleoside triphosphates as substrates. The polypeptide is DNA-directed RNA polymerase subunit alpha (Festucopsis festucoides).